Consider the following 375-residue polypeptide: Chaperone protein DnaJ (375 aa).

In terms of domain architecture, J spans 5-70 (DYYEVLGVER…GKRSAYDQYG (66 aa)). The CR-type zinc-finger motif lies at 134 to 212 (GTTVTIRVPT…CHGQGRVEES (79 aa)). Positions 147, 150, 164, 167, 186, 189, 200, and 203 each coordinate Zn(2+). 4 CXXCXGXG motif repeats span residues 147 to 154 (CKTCDGTG), 164 to 171 (CTTCGGIG), 186 to 193 (CPRCHGSG), and 200 to 207 (CGSCHGQG).

This sequence belongs to the DnaJ family. Homodimer. The cofactor is Zn(2+).

It localises to the cytoplasm. Functionally, participates actively in the response to hyperosmotic and heat shock by preventing the aggregation of stress-denatured proteins and by disaggregating proteins, also in an autonomous, DnaK-independent fashion. Unfolded proteins bind initially to DnaJ; upon interaction with the DnaJ-bound protein, DnaK hydrolyzes its bound ATP, resulting in the formation of a stable complex. GrpE releases ADP from DnaK; ATP binding to DnaK triggers the release of the substrate protein, thus completing the reaction cycle. Several rounds of ATP-dependent interactions between DnaJ, DnaK and GrpE are required for fully efficient folding. Also involved, together with DnaK and GrpE, in the DNA replication of plasmids through activation of initiation proteins. This is Chaperone protein DnaJ from Ectopseudomonas mendocina (strain ymp) (Pseudomonas mendocina).